An 894-amino-acid polypeptide reads, in one-letter code: Disease resistance protein SUMM2 (894 aa).

Residues 31–71 adopt a coiled-coil conformation; sequence ELSKNVVAMKKDMEVLKKKRDDVKRRVDIEEFTRRRERLSQ. Residues 140–443 form the NB-ARC domain; the sequence is TLATPIARIE…CEGFIDENES (304 aa). Residue 183–190 participates in ATP binding; it reads GMGGVGKT. LRR repeat units lie at residues 517 to 538, 539 to 561, 564 to 586, 588 to 610, 611 to 633, 634 to 656, and 660 to 681; these read SVRR…PECL, ELTT…FFRC, MLVV…ISKL, SLRY…QELK, KLRY…SNIS, SLRK…EELQ, and HLEV…LNAP.

Belongs to the disease resistance NB-LRR family. Interacts with PAT1.

Negatively regulated by the MEKK1-MKK1-MKK2-MPK4 kinase cascade. Its function is as follows. Disease resistance protein that mediates defense responses against the bacterial pathogen Pseudomonas syringae pv tomato strain DC3000, and the virulent oomycete Hyaloperonospora arabidopsidis isolate Noco2. Becomes active when the MEKK1-MKK1-MKK2-MPK4 kinase cascade is disrupted by the microbial effector hopAI1. Does not seem to be required for the activation of MPK4 by flg22, or flg22-induced up-regulation of PAD3. Functions downstream of MEKK2/SUMM1 in immune responses, including cell death and defense responses. In Arabidopsis thaliana (Mouse-ear cress), this protein is Disease resistance protein SUMM2.